We begin with the raw amino-acid sequence, 278 residues long: Large ribosomal subunit protein uL2 (278 aa).

A disordered region spans residues 223-278; the sequence is GVAMNPIDHPHGGGEGRTSGGRHPVTPWGFPTKGKKTRSNKRTDTFIVSSRHNRKK.

The protein belongs to the universal ribosomal protein uL2 family. In terms of assembly, part of the 50S ribosomal subunit. Forms a bridge to the 30S subunit in the 70S ribosome.

Its function is as follows. One of the primary rRNA binding proteins. Required for association of the 30S and 50S subunits to form the 70S ribosome, for tRNA binding and peptide bond formation. It has been suggested to have peptidyltransferase activity; this is somewhat controversial. Makes several contacts with the 16S rRNA in the 70S ribosome. The polypeptide is Large ribosomal subunit protein uL2 (Methylobacterium sp. (strain 4-46)).